A 454-amino-acid chain; its full sequence is Butyrophilin-like protein 2 (454 aa).

Topologically, residues Met-1–Arg-6 are cytoplasmic. A helical; Signal-anchor for type II membrane protein membrane pass occupies residues Tyr-7 to Ile-23. The Extracellular segment spans residues Lys-24–Trp-454. Ig-like V-type domains are found at residues Asp-27 to Gln-140, Pro-148 to Ala-234, Ala-244 to Asp-355, and Pro-365 to Ser-452. 4 disulfide bridges follow: Cys-50–Cys-124, Cys-164–Cys-218, Cys-267–Cys-341, and Cys-381–Cys-435. N-linked (GlcNAc...) asparagine glycosylation is found at Asn-210, Asn-296, Asn-427, and Asn-432.

It belongs to the immunoglobulin superfamily. BTN/MOG family. In terms of tissue distribution, highly expressed in intestine and at reduced levels in lung and stomach. Also expressed in thymus, spleen, lymph nodes, T-cells, B-cells, and macrophages.

The protein localises to the membrane. Functionally, negative regulator of T-cell proliferation. This Mus musculus (Mouse) protein is Butyrophilin-like protein 2.